Here is a 168-residue protein sequence, read N- to C-terminus: Transcription antitermination protein NusB (168 aa).

Belongs to the NusB family.

Functionally, involved in transcription antitermination. Required for transcription of ribosomal RNA (rRNA) genes. Binds specifically to the boxA antiterminator sequence of the ribosomal RNA (rrn) operons. This chain is Transcription antitermination protein NusB, found in Chlamydia trachomatis serovar A (strain ATCC VR-571B / DSM 19440 / HAR-13).